A 583-amino-acid polypeptide reads, in one-letter code: Aspartate--tRNA ligase (583 aa).

An L-aspartate-binding site is contributed by E173. The tract at residues Q197–K200 is aspartate. R219 contacts L-aspartate. Residues R219–E221 and Q228 each bind ATP. H444 is an L-aspartate binding site. E478 provides a ligand contact to ATP. R485 lines the L-aspartate pocket. Residue G530–R533 coordinates ATP.

Belongs to the class-II aminoacyl-tRNA synthetase family. Type 1 subfamily. In terms of assembly, homodimer.

Its subcellular location is the cytoplasm. The enzyme catalyses tRNA(Asp) + L-aspartate + ATP = L-aspartyl-tRNA(Asp) + AMP + diphosphate. Its function is as follows. Catalyzes the attachment of L-aspartate to tRNA(Asp) in a two-step reaction: L-aspartate is first activated by ATP to form Asp-AMP and then transferred to the acceptor end of tRNA(Asp). In Azobacteroides pseudotrichonymphae genomovar. CFP2, this protein is Aspartate--tRNA ligase.